Here is a 90-residue protein sequence, read N- to C-terminus: uncharacterized protein (90 aa).

This is an uncharacterized protein from Mycoplasma genitalium (strain ATCC 33530 / DSM 19775 / NCTC 10195 / G37) (Mycoplasmoides genitalium).